Consider the following 421-residue polypeptide: NADH-dependent phenylglyoxylate dehydrogenase subunit epsilon (421 aa).

FAD-binding positions include 15-18, 39-40, and 279-297; these read SSHA, TR, and ATAQ…NAIL.

The protein belongs to the FAD-dependent oxidoreductase family. In terms of assembly, dimer of heteropentamers composed of an alpha (PadG), a beta (PadI), a gamma (PadE), a delta (PadF) and an epsilon (PadH) subunit. It depends on FAD as a cofactor.

The enzyme catalyses phenylglyoxylate + NAD(+) + CoA = benzoyl-CoA + CO2 + NADH. With respect to regulation, activated by magnesium ions and thiamine diphosphate. Its function is as follows. Involved in the anaerobic metabolism of phenylalanine and phenylacetate. Catalyzes the oxidative decarboxylation of phenylglyoxylate to benzoyl-CoA and CO(2). It can also react slowly with 2-oxo-3-methylbutanoate and use different electron acceptors such as benzyl viologen, methyl viologen, FAD or FMN, but NAD seems to be the physiological electron acceptor. Also catalyzes an isotope exchange between CO(2) and the carboxyl group which proves partial or complete reversibility of the oxidative decarboxylation reaction. This is NADH-dependent phenylglyoxylate dehydrogenase subunit epsilon (padH) from Aromatoleum evansii (Azoarcus evansii).